The chain runs to 104 residues: Ig lambda-2 chain C region (104 aa).

Residues 6–99 (PTLTVFPPST…EGNTVEKSLS (94 aa)) form the Ig-like domain. Cysteine 27 and cysteine 85 are disulfide-bonded.

The chain is Ig lambda-2 chain C region from Rattus norvegicus (Rat).